Consider the following 298-residue polypeptide: tRNA dimethylallyltransferase (298 aa).

Position 10–17 (10–17 (GPTASGKT)) interacts with ATP. 12-17 (TASGKT) is a binding site for substrate. The segment at 35–38 (DSMC) is interaction with substrate tRNA.

This sequence belongs to the IPP transferase family. As to quaternary structure, monomer. It depends on Mg(2+) as a cofactor.

The enzyme catalyses adenosine(37) in tRNA + dimethylallyl diphosphate = N(6)-dimethylallyladenosine(37) in tRNA + diphosphate. In terms of biological role, catalyzes the transfer of a dimethylallyl group onto the adenine at position 37 in tRNAs that read codons beginning with uridine, leading to the formation of N6-(dimethylallyl)adenosine (i(6)A). The sequence is that of tRNA dimethylallyltransferase from Hydrogenobaculum sp. (strain Y04AAS1).